Consider the following 341-residue polypeptide: MAKGLLMTYALWAFGGPVGLHHLYLGRDSHALLWMLTLGGGGLGWLWEFWKLPSFVAQANGVQSWKQRPEEERPPLSLLRFASQMVVGVYFGLVALISLSSTANFYIVGLPLAVGLGVLLVAAVGNQTSDFKNTLGAAFLTSPVFYGRPIAILPISLAASITAQKHRRYKVSAVSETLSVRLYRVGLAYLAFTGPLAYSTLYNTAATINYAAETLGSFLSWFNFFPLLGRLVESVLLLPCRIWWLLVGAPGFNSSQFQEWEKLYEFVDSFQDEKRQLAHQVLGIPEGATNEEIHRSYRDLVKVWHPDHNRHQTEEAQRHFLEIQAAYEVLSQPKKPRASWR.

The TM2 domain maps to 4 to 50 (GLLMTYALWAFGGPVGLHHLYLGRDSHALLWMLTLGGGGLGWLWEFW). 7 helical membrane passes run 5–25 (LLMT…HLYL), 30–50 (HALL…WEFW), 81–101 (FASQ…SLSS), 105–125 (FYIV…AAVG), 135–155 (LGAA…ILPI), 185–205 (VGLA…YNTA), and 232–252 (VESV…APGF). In terms of domain architecture, J spans 277 to 341 (LAHQVLGIPE…QPKKPRASWR (65 aa)).

It is found in the membrane. Its function is as follows. May function as a co-chaperone. This chain is DnaJ homolog subfamily C member 22 (Dnajc22), found in Rattus norvegicus (Rat).